Reading from the N-terminus, the 1422-residue chain is Cardiac-enriched FHL2-interacting protein (1422 aa).

Residues 1 to 23 are disordered; sequence MQGNKKCADGFSDTSSIGSVLDE. Residue T119 is modified to Phosphothreonine. Disordered regions lie at residues 151–177, 199–265, 279–443, 459–500, 516–718, 731–850, 877–1127, 1142–1244, and 1353–1422; these read RTEA…KFAH, AGVS…GRGK, SAFE…SSPF, LETS…KAPS, YSPL…SDSQ, FSTS…TNKH, VSSE…HLER, TGAA…GWEP, and RQGS…EGVS. Residues 201–210 show a composition bias toward polar residues; that stretch reads VSSTHQSSHQ. Composition is skewed to basic and acidic residues over residues 284-298 and 305-315; these read WDAH…KDIT and KAPKHYEDMPL. At S327 the chain carries Phosphoserine. The span at 342–351 shows a compositional bias: polar residues; the sequence is SPSGIQSTSG. A compositionally biased stretch (basic and acidic residues) spans 395-405; it reads GPHDASEDKKQ. Over residues 461 to 470 the composition is skewed to polar residues; that stretch reads TSDTQPVETS. Phosphoserine is present on S472. Basic and acidic residues-rich tracts occupy residues 481–495, 524–537, and 579–588; these read QEKE…DSYK, GFDE…DGKQ, and PAMDSRESFA. The span at 590–606 shows a compositional bias: low complexity; that stretch reads SHPTFSSPSASSKTHFS. Composition is skewed to basic and acidic residues over residues 611 to 622, 635 to 644, and 653 to 675; these read AAERNSHEKEEA, WHPDSRENLP, and CNRD…EKRL. A compositionally biased stretch (low complexity) spans 731-744; the sequence is FSTSSSDQSFASFE. Over residues 790–801 the composition is skewed to basic and acidic residues; sequence GVEEHRQKETQR. S815 bears the Phosphoserine mark. The segment covering 828 to 839 has biased composition (basic and acidic residues); sequence ADKDTALSHAKD. Polar residues-rich tracts occupy residues 907 to 926 and 944 to 954; these read SESQ…STEQ and QDETSQQTRKG. Positions 975–991 are enriched in basic and acidic residues; sequence ADERLAHEKSRSADSGK. The segment covering 1048-1067 has biased composition (polar residues); that stretch reads AATSPNPSSLGGSSTCSPAA. Residues 1087–1099 are compositionally biased toward pro residues; that stretch reads PPGPGPWASPGPS. Basic residues predominate over residues 1173–1184; that stretch reads RRAKKLASKRRK. Over residues 1185 to 1202 the composition is skewed to basic and acidic residues; sequence SDQMSEKHTEAWEGKSFT. Polar residues predominate over residues 1353 to 1366; that stretch reads RQGSSHRPQSSQGA. Positions 1411–1422 are enriched in acidic residues; it reads DDLEDFATEGVS.

As to quaternary structure, interacts with FHL2.

The protein resides in the cytoplasm. It is found in the myofibril. Its subcellular location is the sarcomere. The protein localises to the z line. Functionally, plays an important role in cardiomyocyte hypertrophy via activation of the calcineurin/NFAT signaling pathway. The protein is Cardiac-enriched FHL2-interacting protein of Rattus norvegicus (Rat).